The sequence spans 156 residues: Ribosomal RNA large subunit methyltransferase H (156 aa).

S-adenosyl-L-methionine contacts are provided by residues Leu73, Gly104, and 123–128 (LSSLTL).

The protein belongs to the RNA methyltransferase RlmH family. Homodimer.

The protein localises to the cytoplasm. The enzyme catalyses pseudouridine(1915) in 23S rRNA + S-adenosyl-L-methionine = N(3)-methylpseudouridine(1915) in 23S rRNA + S-adenosyl-L-homocysteine + H(+). Specifically methylates the pseudouridine at position 1915 (m3Psi1915) in 23S rRNA. This is Ribosomal RNA large subunit methyltransferase H from Neisseria meningitidis serogroup C / serotype 2a (strain ATCC 700532 / DSM 15464 / FAM18).